Here is a 368-residue protein sequence, read N- to C-terminus: Reverse transcriptase-like protein (368 aa).

A Reverse transcriptase domain is found at 91 to 318; it reads TRELTVPYWY…SELNWLGHKV (228 aa).

The protein resides in the mitochondrion. The chain is Reverse transcriptase-like protein (RTL) from Chlamydomonas reinhardtii (Chlamydomonas smithii).